The following is a 191-amino-acid chain: Cdc42 homolog (191 aa).

Gly10–Thr17 provides a ligand contact to GTP. Residues Tyr32–Tyr40 carry the Effector region motif. GTP is bound by residues Asp57 to Gln61 and Thr115 to Asp118. Cys188 bears the Cysteine methyl ester mark. Cys188 is lipidated: S-geranylgeranyl cysteine. Positions Lys189–Leu191 are cleaved as a propeptide — removed in mature form.

The protein belongs to the small GTPase superfamily. Rho family. CDC42 subfamily.

It is found in the cell junction. It localises to the adherens junction. The protein resides in the cell membrane. Functionally, regulates mbt kinase activity and is also required to recruit mbt to adherens junctions. Together with mbt, regulates photoreceptor cell morphogenesis. The chain is Cdc42 homolog from Aedes aegypti (Yellowfever mosquito).